The primary structure comprises 365 residues: tRNA 2-selenouridine synthase (365 aa).

Residues 15-138 (LVSDHPIMDA…MRQFLIETID (124 aa)) form the Rhodanese domain. Cys98 serves as the catalytic S-selanylcysteine intermediate.

Belongs to the SelU family. In terms of assembly, monomer.

It carries out the reaction 5-methylaminomethyl-2-thiouridine(34) in tRNA + selenophosphate + (2E)-geranyl diphosphate + H2O + H(+) = 5-methylaminomethyl-2-selenouridine(34) in tRNA + (2E)-thiogeraniol + phosphate + diphosphate. The enzyme catalyses 5-methylaminomethyl-2-thiouridine(34) in tRNA + (2E)-geranyl diphosphate = 5-methylaminomethyl-S-(2E)-geranyl-thiouridine(34) in tRNA + diphosphate. The catalysed reaction is 5-methylaminomethyl-S-(2E)-geranyl-thiouridine(34) in tRNA + selenophosphate + H(+) = 5-methylaminomethyl-2-(Se-phospho)selenouridine(34) in tRNA + (2E)-thiogeraniol. It catalyses the reaction 5-methylaminomethyl-2-(Se-phospho)selenouridine(34) in tRNA + H2O = 5-methylaminomethyl-2-selenouridine(34) in tRNA + phosphate. Its function is as follows. Involved in the post-transcriptional modification of the uridine at the wobble position (U34) of tRNA(Lys), tRNA(Glu) and tRNA(Gln). Catalyzes the conversion of 2-thiouridine (S2U-RNA) to 2-selenouridine (Se2U-RNA). Acts in a two-step process involving geranylation of 2-thiouridine (S2U) to S-geranyl-2-thiouridine (geS2U) and subsequent selenation of the latter derivative to 2-selenouridine (Se2U) in the tRNA chain. The sequence is that of tRNA 2-selenouridine synthase from Shewanella piezotolerans (strain WP3 / JCM 13877).